The sequence spans 139 residues: D-ribose pyranase (139 aa).

The active-site Proton donor is the His20. Residues Asp28, His106, and 128–130 (YAN) each bind substrate.

It belongs to the RbsD / FucU family. RbsD subfamily. In terms of assembly, homodecamer.

It is found in the cytoplasm. The enzyme catalyses beta-D-ribopyranose = beta-D-ribofuranose. The protein operates within carbohydrate metabolism; D-ribose degradation; D-ribose 5-phosphate from beta-D-ribopyranose: step 1/2. Its function is as follows. Catalyzes the interconversion of beta-pyran and beta-furan forms of D-ribose. The polypeptide is D-ribose pyranase (Salmonella arizonae (strain ATCC BAA-731 / CDC346-86 / RSK2980)).